The following is an 891-amino-acid chain: Probable serine/threonine-protein kinase mkcC (891 aa).

Disordered regions lie at residues 24-70 (IELN…TATI), 85-121 (ANNN…APSS), 264-435 (DDPQ…AREK), 495-526 (NSLG…PEVS), and 565-588 (TTAS…DDYD). Over residues 29–41 (QEEQQQPEQQEQP) the composition is skewed to low complexity. The span at 45–58 (EELKDNNEKIKTSE) shows a compositional bias: basic and acidic residues. 5 stretches are compositionally biased toward low complexity: residues 61–70 (TTTTTTTATI), 86–105 (NNNT…LNNN), 297–314 (STSN…TTGK), 322–360 (SNSS…SGTS), and 379–397 (TTGN…TTSS). Residues 422–432 (RKRKEQKRSRA) show a composition bias toward basic residues. Residues 495–522 (NSLGSSINKNNSNNTTTTTTTTNTNNKS) show a composition bias toward low complexity. One can recognise a Protein kinase domain in the interval 616 to 864 (YKNLKQIGSG…AEQLLKHPWI (249 aa)). ATP contacts are provided by residues 622-630 (IGSGGFGSV) and Lys-645. Asp-735 acts as the Proton acceptor in catalysis.

The protein belongs to the protein kinase superfamily. STE Ser/Thr protein kinase family. STE20 subfamily. Mg(2+) serves as cofactor.

The enzyme catalyses L-seryl-[protein] + ATP = O-phospho-L-seryl-[protein] + ADP + H(+). The catalysed reaction is L-threonyl-[protein] + ATP = O-phospho-L-threonyl-[protein] + ADP + H(+). The chain is Probable serine/threonine-protein kinase mkcC from Dictyostelium discoideum (Social amoeba).